We begin with the raw amino-acid sequence, 202 residues long: Holliday junction branch migration complex subunit RuvA (202 aa).

Positions 1–63 (MIAFLSGRVV…EDSLTLFGFA (63 aa)) are domain I. The domain II stretch occupies residues 64–142 (DDDERDTFER…EPGGDTAATP (79 aa)). Residues 143-152 (EQSAAAAPRN) are flexible linker. The segment at 152–202 (NWRAQVVSGLVNLGWSTREAEAAADAVAAEAGEQPDVAALLRSALRRLSRA) is domain III.

It belongs to the RuvA family. Homotetramer. Forms an RuvA(8)-RuvB(12)-Holliday junction (HJ) complex. HJ DNA is sandwiched between 2 RuvA tetramers; dsDNA enters through RuvA and exits via RuvB. An RuvB hexamer assembles on each DNA strand where it exits the tetramer. Each RuvB hexamer is contacted by two RuvA subunits (via domain III) on 2 adjacent RuvB subunits; this complex drives branch migration. In the full resolvosome a probable DNA-RuvA(4)-RuvB(12)-RuvC(2) complex forms which resolves the HJ.

Its subcellular location is the cytoplasm. The RuvA-RuvB-RuvC complex processes Holliday junction (HJ) DNA during genetic recombination and DNA repair, while the RuvA-RuvB complex plays an important role in the rescue of blocked DNA replication forks via replication fork reversal (RFR). RuvA specifically binds to HJ cruciform DNA, conferring on it an open structure. The RuvB hexamer acts as an ATP-dependent pump, pulling dsDNA into and through the RuvAB complex. HJ branch migration allows RuvC to scan DNA until it finds its consensus sequence, where it cleaves and resolves the cruciform DNA. In Thermobifida fusca (strain YX), this protein is Holliday junction branch migration complex subunit RuvA.